The sequence spans 126 residues: Fluoride-specific ion channel FluC 2 (126 aa).

Helical transmembrane passes span 11 to 31 (IFLIGAGGFLGAICRFSLCEL), 43 to 63 (VLGSFMLGLIMYDTEYIGFIG), 69 to 89 (AFGTGFMGAFTTFSTFAVQSF), and 93 to 113 (FFPALENISVNLFLALVGVFM). G76 and T79 together coordinate Na(+).

The protein belongs to the fluoride channel Fluc/FEX (TC 1.A.43) family.

It is found in the cell membrane. The enzyme catalyses fluoride(in) = fluoride(out). With respect to regulation, na(+) is not transported, but it plays an essential structural role and its presence is essential for fluoride channel function. Its function is as follows. Fluoride-specific ion channel. Important for reducing fluoride concentration in the cell, thus reducing its toxicity. The protein is Fluoride-specific ion channel FluC 2 of Methanosarcina barkeri (strain Fusaro / DSM 804).